The primary structure comprises 321 residues: MSKILVIAEHRRNDLRPVSLELIGAANGLKKSGEDKVVVAVIGSQADAFVPALSVNGVDELVVVKGSSIDFDPDVFEASVSALIAAHNPSVVLLPHSVDSLGYASSLASKTGYGFATDVYIVEYQGDELVATRGGYNQKVNVEVDFPGKSTVVLTIRPSVFKPLEGAGSPVVSNVDAPSVQSRSQNKDYVEVGGGNDIDITTVDFIMSIGRGIGEETNVEQFRELADEAGATLCCSRPIADAGWLPKSRQVGQSGKVVGSCKLYVAMGISGSIQHMAGMKHVPTIIAVNTDPGASIFTIAKYGIVADIFDIEEELKAQLAA.

Positions 211, 236, 237, 250, 251, 254, 255, 270, 272, 274, 275, 289, 307, and 308 each coordinate FAD.

As to quaternary structure, heterodimer of an alpha and a beta subunit. Forms a ternary complex with trimethylamine dehydrogenase. FAD is required as a cofactor.

Its function is as follows. Heterodimeric electron transfer flavoprotein that accepts electrons from trimethylamine dehydrogenase. It transfers the electrons to the main respiratory chain via ETF-ubiquinone oxidoreductase (ETF dehydrogenase). The sequence is that of Electron transfer flavoprotein subunit alpha (etfA) from Methylophilus methylotrophus (Bacterium W3A1).